We begin with the raw amino-acid sequence, 104 residues long: Flagellar hook-basal body complex protein FliE (104 aa).

This sequence belongs to the FliE family.

Its subcellular location is the bacterial flagellum basal body. The protein is Flagellar hook-basal body complex protein FliE of Edwardsiella ictaluri (strain 93-146).